Reading from the N-terminus, the 767-residue chain is Mst2 complex subunit nto1 (767 aa).

The PHD-type 1 zinc-finger motif lies at 194 to 244; it reads DGRCVICNEAECENSNAIVFCDNCNTSVHQNCYGIPFVPEGQWFCKKCLLA. A C2HC pre-PHD-type zinc finger spans residues 248–281; sequence VICCAFCPDRDGAFCTTLDGRWCHTICAIAIPEI. The PHD-type 2 zinc-finger motif lies at 305–363; sequence LVCCICKLRWGTCVQCSDKNCYAAYHITCARRAGFFYKIYSHSASYDSVDMETYCDKHT. Residues 724–752 are compositionally biased toward polar residues; sequence VTGQSNHALPNSVTKKNGTKQPYTKNSLP. Residues 724–767 are disordered; sequence VTGQSNHALPNSVTKKNGTKQPYTKNSLPFNERITRSKAKKNYS.

In terms of assembly, component of the mst2 complex composed of at least eaf6, mst2, nto1, pdp3, ptf1, ptf2 and tfg3.

Its subcellular location is the cytoplasm. It is found in the nucleus. Its function is as follows. Component of the mst2 complex which is a highly specific H3 lysine 14 (H3K14) acetyltransferase that functions together with gcn5 to regulate global levels of H3K14 acetylation (H3K14ac), critical for DNA damage checkpoint activation. The polypeptide is Mst2 complex subunit nto1 (nto1) (Schizosaccharomyces pombe (strain 972 / ATCC 24843) (Fission yeast)).